We begin with the raw amino-acid sequence, 251 residues long: MRKPVIAGNWKLYKTTSEALELVNELIPLVKNASGVEIVVAPVFTVLSTVKNALKGTNINLAAQDCFWDEQGAYTGEVSSTMLLDAGCSHVIIGHSERRQFFGETDETVNKKNIAALRAGLTILFCIGETLHEREENQTFTVLERQISGGISGITKDELKNVIIAYEPVWAIGTGKTATDDQAQEAHKFIRGVVAKLCDSESAENIRILYGGSVKPENVKGLMAQKDIDGALVGGASLKADSFAHIVRFSE.

Position 9 to 11 (9 to 11 (NWK)) interacts with substrate. The active-site Electrophile is the H95. Residue E167 is the Proton acceptor of the active site. Substrate is bound by residues G173, S213, and 234–235 (GG).

Belongs to the triosephosphate isomerase family. Homodimer.

It is found in the cytoplasm. It catalyses the reaction D-glyceraldehyde 3-phosphate = dihydroxyacetone phosphate. Its pathway is carbohydrate biosynthesis; gluconeogenesis. It functions in the pathway carbohydrate degradation; glycolysis; D-glyceraldehyde 3-phosphate from glycerone phosphate: step 1/1. Its function is as follows. Involved in the gluconeogenesis. Catalyzes stereospecifically the conversion of dihydroxyacetone phosphate (DHAP) to D-glyceraldehyde-3-phosphate (G3P). In Geotalea uraniireducens (strain Rf4) (Geobacter uraniireducens), this protein is Triosephosphate isomerase.